The primary structure comprises 220 residues: 1-Cys peroxiredoxin B (220 aa).

Residues 4-165 (LTLGDVVPDL…VLRATDALLT (162 aa)) form the Thioredoxin domain. The Cysteine sulfenic acid (-SOH) intermediate role is filled by C46. Residues 195-218 (KARFPAGFETAQLPSNKCYLRFTQ) carry the Bipartite nuclear localization signal motif.

This sequence belongs to the peroxiredoxin family. Prx6 subfamily.

It is found in the nucleus. The protein localises to the cytoplasm. It catalyses the reaction a hydroperoxide + [thioredoxin]-dithiol = an alcohol + [thioredoxin]-disulfide + H2O. Its function is as follows. Thiol-specific peroxidase that catalyzes the reduction of hydrogen peroxide and organic hydroperoxides to water and alcohols, respectively. Seems to contribute to the inhibition of germination during stress. This is 1-Cys peroxiredoxin B from Oryza sativa subsp. japonica (Rice).